An 89-amino-acid polypeptide reads, in one-letter code: Small ribosomal subunit protein uS15 (89 aa).

This sequence belongs to the universal ribosomal protein uS15 family. As to quaternary structure, part of the 30S ribosomal subunit. Forms a bridge to the 50S subunit in the 70S ribosome, contacting the 23S rRNA.

In terms of biological role, one of the primary rRNA binding proteins, it binds directly to 16S rRNA where it helps nucleate assembly of the platform of the 30S subunit by binding and bridging several RNA helices of the 16S rRNA. Functionally, forms an intersubunit bridge (bridge B4) with the 23S rRNA of the 50S subunit in the ribosome. The chain is Small ribosomal subunit protein uS15 from Burkholderia mallei (strain NCTC 10247).